Reading from the N-terminus, the 173-residue chain is Translation initiation factor IF-3 (173 aa).

This sequence belongs to the IF-3 family. In terms of assembly, monomer.

The protein resides in the cytoplasm. Functionally, IF-3 binds to the 30S ribosomal subunit and shifts the equilibrium between 70S ribosomes and their 50S and 30S subunits in favor of the free subunits, thus enhancing the availability of 30S subunits on which protein synthesis initiation begins. The polypeptide is Translation initiation factor IF-3 (Enterococcus faecalis (strain ATCC 700802 / V583)).